A 639-amino-acid polypeptide reads, in one-letter code: MGKIIGIDLGTTNSCVAVLDGGKARVLENAEGDRTTPSIIAYTDDETIVGQPAKRQAVTNPNNTFFAIKRLIGRRFKDDEVQRDVNIMPFKIIAADNGDAWVESRGNKMAPPQVSAEILKKMKKTAEDFLGEEVTEAVITVPAYFNDSQRQATKDAGRIAGLEVKRIINEPTAAALAYGIDKKQGDNIVAVYDLGGGTFDISIIEIDSNDGDQTFEVLATNGDTHLGGEDFDNRLINYLADEFKKEQGLDLRKDPLAMQRLKEAAEKAKIELSSTNQTEVNLPYITADATGPKHLVVKITRAKLESLVEDLIIRTLEPLKVALADADLSVSDINEVILVGGQTRMPKVQEAVSNFFGKEPRKDVNPDEAVAVGAAIQAGVLSGDVKDVLLLDVTPLSLGIETMGSVMTKLIEKNTTIPTKAQQVFSTADDNQSAVTIHVLQGERKQASANKSLGQFNLDGIEPAPRGMPQIEVMFDIDADGILHVSATDKKTGKKQNITIKASSGLSEEEVAQMVRDAEAHAEEDKKFEELVQSRNQADGLVHATKKQVEEAGDALPADDKAKIEAAMSAVEVATKGNDKEAIEKATQELIEASAKLMEIAQAKAQTQGGAQEGAAKQSNATADDVVDAEFEEVKDDKK.

Threonine 198 bears the Phosphothreonine; by autocatalysis mark. Positions 603–618 are enriched in low complexity; it reads AKAQTQGGAQEGAAKQ. Positions 603–639 are disordered; it reads AKAQTQGGAQEGAAKQSNATADDVVDAEFEEVKDDKK. Acidic residues predominate over residues 625–639; the sequence is DVVDAEFEEVKDDKK.

It belongs to the heat shock protein 70 family.

Its function is as follows. Acts as a chaperone. This chain is Chaperone protein DnaK, found in Shewanella sp. (strain ANA-3).